We begin with the raw amino-acid sequence, 200 residues long: ATP-dependent Clp protease proteolytic subunit (200 aa).

Residue serine 102 is the Nucleophile of the active site. Residue histidine 127 is part of the active site.

The protein belongs to the peptidase S14 family. As to quaternary structure, fourteen ClpP subunits assemble into 2 heptameric rings which stack back to back to give a disk-like structure with a central cavity, resembling the structure of eukaryotic proteasomes.

Its subcellular location is the cytoplasm. The catalysed reaction is Hydrolysis of proteins to small peptides in the presence of ATP and magnesium. alpha-casein is the usual test substrate. In the absence of ATP, only oligopeptides shorter than five residues are hydrolyzed (such as succinyl-Leu-Tyr-|-NHMec, and Leu-Tyr-Leu-|-Tyr-Trp, in which cleavage of the -Tyr-|-Leu- and -Tyr-|-Trp bonds also occurs).. Functionally, cleaves peptides in various proteins in a process that requires ATP hydrolysis. Has a chymotrypsin-like activity. Plays a major role in the degradation of misfolded proteins. The polypeptide is ATP-dependent Clp protease proteolytic subunit (Dehalococcoides mccartyi (strain ATCC BAA-2100 / JCM 16839 / KCTC 5957 / BAV1)).